Reading from the N-terminus, the 492-residue chain is Glycerol kinase (492 aa).

Threonine 11 lines the ADP pocket. Residues threonine 11 and threonine 12 each contribute to the ATP site. Threonine 11 is a binding site for sn-glycerol 3-phosphate. Lysine 15 lines the ADP pocket. The sn-glycerol 3-phosphate site is built by arginine 79, glutamate 80, tyrosine 129, and aspartate 238. 5 residues coordinate glycerol: arginine 79, glutamate 80, tyrosine 129, aspartate 238, and glutamine 239. Residues threonine 260, glycine 302, glycine 403, and asparagine 407 each coordinate ADP. Residues threonine 260, glycine 302, and glycine 403 each coordinate ATP.

Belongs to the FGGY kinase family.

The enzyme catalyses glycerol + ATP = sn-glycerol 3-phosphate + ADP + H(+). Its pathway is polyol metabolism; glycerol degradation via glycerol kinase pathway; sn-glycerol 3-phosphate from glycerol: step 1/1. Its activity is regulated as follows. Inhibited by fructose 1,6-bisphosphate (FBP). Key enzyme in the regulation of glycerol uptake and metabolism. Catalyzes the phosphorylation of glycerol to yield sn-glycerol 3-phosphate. This Aquifex aeolicus (strain VF5) protein is Glycerol kinase.